A 266-amino-acid chain; its full sequence is Protein crossbronx-like (266 aa).

A UBC core domain is found at 15-178; sequence KQGYHILAEY…VQEQAIASRN (164 aa).

This sequence belongs to the ubiquitin-conjugating enzyme family. FTS subfamily.

This Drosophila yakuba (Fruit fly) protein is Protein crossbronx-like.